Here is a 151-residue protein sequence, read N- to C-terminus: Large ribosomal subunit protein bL9 (151 aa).

It belongs to the bacterial ribosomal protein bL9 family.

Its function is as follows. Binds to the 23S rRNA. The sequence is that of Large ribosomal subunit protein bL9 from Rhodococcus erythropolis (strain PR4 / NBRC 100887).